A 273-amino-acid polypeptide reads, in one-letter code: 2,3,4,5-tetrahydropyridine-2,6-dicarboxylate N-succinyltransferase (273 aa).

2 residues coordinate substrate: arginine 105 and aspartate 142.

This sequence belongs to the transferase hexapeptide repeat family. As to quaternary structure, homotrimer.

It localises to the cytoplasm. It carries out the reaction (S)-2,3,4,5-tetrahydrodipicolinate + succinyl-CoA + H2O = (S)-2-succinylamino-6-oxoheptanedioate + CoA. The protein operates within amino-acid biosynthesis; L-lysine biosynthesis via DAP pathway; LL-2,6-diaminopimelate from (S)-tetrahydrodipicolinate (succinylase route): step 1/3. This chain is 2,3,4,5-tetrahydropyridine-2,6-dicarboxylate N-succinyltransferase, found in Bordetella bronchiseptica (strain ATCC BAA-588 / NCTC 13252 / RB50) (Alcaligenes bronchisepticus).